The sequence spans 597 residues: uncharacterized protein (597 aa).

In terms of domain architecture, VWFA spans 378 to 575 (EVSFVVDNSG…YLPRELLRTL (198 aa)).

This is an uncharacterized protein from Treponema pallidum (strain Nichols).